A 94-amino-acid chain; its full sequence is Conotoxin Gla-MrII (94 aa).

The signal sequence occupies residues 1–25 (MFGHTSVSFLLLSIVALGMVATVIC). A 4-carboxyglutamate mark is found at Glu30, Glu34, Glu37, Glu40, and Glu41. Positions 78-94 (STHMQKRFLRMPRDLAD) are excised as a propeptide.

Belongs to the conotoxin I2 superfamily. Contains 4 disulfide bonds. As to expression, expressed by the venom duct.

It localises to the secreted. This is Conotoxin Gla-MrII from Conus marmoreus (Marble cone).